A 357-amino-acid chain; its full sequence is uncharacterized protein (357 aa).

The zn(2)-C6 fungal-type DNA-binding region spans 6–32 (CIVCRQKKIKCDRKNPCTNCEQAGEKC).

The protein resides in the nucleus. This is an uncharacterized protein from Schizosaccharomyces pombe (strain 972 / ATCC 24843) (Fission yeast).